Reading from the N-terminus, the 297-residue chain is Ribonuclease HIII (297 aa).

Positions 81 to 297 constitute an RNase H type-2 domain; that stretch reads IPIIGTDEVG…NTKKAQALLK (217 aa). 3 residues coordinate a divalent metal cation: Asp-87, Glu-88, and Asp-192.

This sequence belongs to the RNase HII family. RnhC subfamily. Mn(2+) is required as a cofactor. It depends on Mg(2+) as a cofactor.

The protein resides in the cytoplasm. The catalysed reaction is Endonucleolytic cleavage to 5'-phosphomonoester.. In terms of biological role, endonuclease that specifically degrades the RNA of RNA-DNA hybrids. The protein is Ribonuclease HIII of Streptococcus agalactiae serotype III (strain NEM316).